We begin with the raw amino-acid sequence, 34 residues long: MGSMILDITGNSMSAIVKVVSNIIRPLVLKNFII.

This is an uncharacterized protein from Saccharomyces cerevisiae (strain ATCC 204508 / S288c) (Baker's yeast).